The primary structure comprises 247 residues: MSLSITHEKSLIDNYIWILFDKSKAIVIDPGESEKIINFLDKNNLTLEFIFLTHGHCDHTKGVFSLKEKFPNASLFVPIGLELGLGESIIKEGDELNLLNSTFNVLELPGHTDNHIGIMYKDNLFCGDVLFSAGCGRVGSNYKDMYLSLKKIKSMDDKTKIYFSHEYTLDNLKFAHYIDPKNKNIINYIEVFKEKPDTVSAPTTLLLEKEINPFLRLSENIDIKNKINNEFDAFVYLRKLKDKFNSI.

Positions 54, 56, 58, 59, 111, 128, and 165 each coordinate Zn(2+).

The protein belongs to the metallo-beta-lactamase superfamily. Glyoxalase II family. As to quaternary structure, monomer. Requires Zn(2+) as cofactor.

It carries out the reaction an S-(2-hydroxyacyl)glutathione + H2O = a 2-hydroxy carboxylate + glutathione + H(+). The protein operates within secondary metabolite metabolism; methylglyoxal degradation; (R)-lactate from methylglyoxal: step 2/2. In terms of biological role, thiolesterase that catalyzes the hydrolysis of S-D-lactoyl-glutathione to form glutathione and D-lactic acid. This is Hydroxyacylglutathione hydrolase 1 from Vibrio vulnificus (strain YJ016).